The sequence spans 103 residues: MFVKVGDKVRVISGKDKGKEGTIKQTLAKKNRVVVEGLNMIKKHQKPNNANPQGGILDVEAPMDVSNVMLIDPSTNEPTRVGFKTVDGKKVRVSKKSGESIDK.

Belongs to the universal ribosomal protein uL24 family. As to quaternary structure, part of the 50S ribosomal subunit.

In terms of biological role, one of two assembly initiator proteins, it binds directly to the 5'-end of the 23S rRNA, where it nucleates assembly of the 50S subunit. Functionally, one of the proteins that surrounds the polypeptide exit tunnel on the outside of the subunit. The chain is Large ribosomal subunit protein uL24 from Pediococcus pentosaceus (strain ATCC 25745 / CCUG 21536 / LMG 10740 / 183-1w).